The primary structure comprises 417 residues: Peptidyl-Asp metalloendopeptidase (417 aa).

The first 25 residues, methionine 1–alanine 25, serve as a signal peptide directing secretion. Histidine 327 is a Zn(2+) binding site. Glutamate 328 is a catalytic residue. Histidine 331 and histidine 337 together coordinate Zn(2+).

The protein belongs to the peptidase M72 family. Zn(2+) is required as a cofactor.

It catalyses the reaction Cleavage of Xaa-|-Asp, Xaa-|-Glu and Xaa-|-cysteic acid bonds.. Metalloprotease, specifically cleaves on the N-terminal side of aspartyl, glutamyl and cysteic acid residues. The protein is Peptidyl-Asp metalloendopeptidase of Stenotrophomonas maltophilia (strain R551-3).